Consider the following 236-residue polypeptide: MGNGMTKVLPGLYLGNFIDAKDPDQLGRNKITHIVSIHESPQPLLQDITYLRISVSDTPEVPIKKHFKECVHFIHSCRLNGGNCLVHCFAGISRSTTVVIAYVMTVTGLGWQEVLEAIKASRPIANPNPGFRQQLEEFGWANSQKLRRQLEERFGEIPFRDEEDLRALLPLCRRCRQGPGTSAPSATTASSAASEGTLQRLVPRSPRESHRPLPLLARVKQTFFCLPRCLSRKGGK.

A lipid anchor (N-myristoyl glycine) is attached at Gly2. In terms of domain architecture, Tyrosine-protein phosphatase spans 4–144 (GMTKVLPGLY…LEEFGWANSQ (141 aa)). Cys88 (phosphocysteine intermediate) is an active-site residue. Positions 178 to 213 (GPGTSAPSATTASSAASEGTLQRLVPRSPRESHRPL) are disordered. Over residues 181-194 (TSAPSATTASSAAS) the composition is skewed to low complexity.

It belongs to the protein-tyrosine phosphatase family. Non-receptor class dual specificity subfamily.

The protein resides in the cell membrane. It carries out the reaction O-phospho-L-tyrosyl-[protein] + H2O = L-tyrosyl-[protein] + phosphate. It catalyses the reaction O-phospho-L-seryl-[protein] + H2O = L-seryl-[protein] + phosphate. The enzyme catalyses O-phospho-L-threonyl-[protein] + H2O = L-threonyl-[protein] + phosphate. May play a role in the regulation of oligodendrocyte differentiation. May play a role in the regulation of myelin formation. Involved in the regulation of Erk1/2 phosphorylation in Schwann cells; the signaling may be linked to the regulation of myelination. May dephosphorylate MAPK13, ATF2, ERBB3, PDGFRB and SNX6. In Rattus norvegicus (Rat), this protein is Dual specificity protein phosphatase 15 (Dusp15).